We begin with the raw amino-acid sequence, 412 residues long: 2-methylacyl-CoA dehydrogenase, mitochondrial (412 aa).

Residues 1–25 constitute a mitochondrion transit peptide; the sequence is MHKLFAVRSLSSAIVKSFKSLQNQQ. FAD contacts are provided by residues 154–163 and 187–189; these read LAMSEPNAGS and WCT. Ser163 lines the substrate pocket. Substrate-binding positions include 209-210, Tyr264, and 271-274; these read SK and DLER. Catalysis depends on Glu273, which acts as the Proton acceptor. FAD is bound by residues Arg299, Gln310, and 367–371; that span reads QCLGG. 394-395 serves as a coordination point for substrate; sequence AG. 396–398 provides a ligand contact to FAD; that stretch reads TSE.

Belongs to the acyl-CoA dehydrogenase family. In terms of assembly, homotetramer. The cofactor is FAD. Expressed in flowers.

The protein resides in the mitochondrion. It catalyses the reaction 2-methylbutanoyl-CoA + oxidized [electron-transfer flavoprotein] + H(+) = (2E)-2-methylbut-2-enoyl-CoA + reduced [electron-transfer flavoprotein]. Short/branched-chain acyl-CoA dehydrogenase (SBCAD). Uses 2-methylbutanoyl-CoA as substrate. Minor activity with the straight-chain substrates, butanoyl-CoA, valeryl-CoA, hexanoyl-CoA, and octanoyl-CoA but no activity with isovaleryl-CoA. The polypeptide is 2-methylacyl-CoA dehydrogenase, mitochondrial (2MBCD) (Solanum tuberosum (Potato)).